An 805-amino-acid chain; its full sequence is MLNYNHNQIEKKWQDYWDENKTFKTNDNLGQKKFYALDMFPYPSGAGLHVGHPEGYTATDIISRYKRMQGYNVLHPMGWDAFGLPAEQYALDTGNDPREFTKKNIQTFKRQIKELGFSYDWDREVNTTDPEYYKWTQWIFIQLYNKGLAYVDEVAVNWCPALGTVLSNEEVIDGVSERGGHPVYRKPMKQWVLKITEYADQLLADLDDLDWPESLKDMQRNWIGRSEGAKVSFDVDNTEGKVEVFTTRPDTIYGASFLVLSPEHALVNSITTDEYKEKVKAYQTEASKKSDLERTDLAKDKSGVFTGAYAINPLSGEKVQIWIADYVLSTYGTGAIMAVPAHDDRDYEFAKKFDLPIIEVIEGGNVEEAAYTGEGKHINSGELDGLENEAAITKAIQLLEQKGAGEKKVNYKLRDWLFSRQRYWGEPIPVIHWEDGTMTTVPEEELPLLLPETDEIKPSGTGESPLANIDSFVNVVDEKTGMKGRRETNTMPQWAGSCWYYLRYIDPKNENMLADPEKLKHWLPVDLYIGGVEHAVLHLLYARFWHKVLYDLGIVPTKEPFQKLFNQGMILGEGNEKMSKSKGNVINPDDIVQSHGADTLRLYEMFMGPLDAAIAWSEKGLDGSRRFLDRVWRLMVNEDGTLSSKIVTTNNKSLDKVYNQTVKKVTEDFETLGFNTAISQLMVFINECYKVDEVYKPYIEGFVKMLAPIAPHIGEELWSKLGHEESITYQPWPTYDEALLVDDEVEIVVQVNGKLRAKIKIAKDTSKEEMQEIALSNDNVKASIEGKDIMKVIAVPQKLVNIVAK.

The short motif at 41–52 (PYPSGAGLHVGH) is the 'HIGH' region element. Residues 577–581 (KMSKS) carry the 'KMSKS' region motif. Residue Lys-580 coordinates ATP.

Belongs to the class-I aminoacyl-tRNA synthetase family.

It localises to the cytoplasm. It carries out the reaction tRNA(Leu) + L-leucine + ATP = L-leucyl-tRNA(Leu) + AMP + diphosphate. This chain is Leucine--tRNA ligase, found in Staphylococcus aureus (strain JH1).